Consider the following 357-residue polypeptide: UDP-N-acetylglucosamine--N-acetylmuramyl-(pentapeptide) pyrophosphoryl-undecaprenol N-acetylglucosamine transferase (357 aa).

Residues 13-15 (TGG), N125, R161, S189, I243, and Q288 contribute to the UDP-N-acetyl-alpha-D-glucosamine site.

This sequence belongs to the glycosyltransferase 28 family. MurG subfamily.

It localises to the cell inner membrane. The catalysed reaction is di-trans,octa-cis-undecaprenyl diphospho-N-acetyl-alpha-D-muramoyl-L-alanyl-D-glutamyl-meso-2,6-diaminopimeloyl-D-alanyl-D-alanine + UDP-N-acetyl-alpha-D-glucosamine = di-trans,octa-cis-undecaprenyl diphospho-[N-acetyl-alpha-D-glucosaminyl-(1-&gt;4)]-N-acetyl-alpha-D-muramoyl-L-alanyl-D-glutamyl-meso-2,6-diaminopimeloyl-D-alanyl-D-alanine + UDP + H(+). The protein operates within cell wall biogenesis; peptidoglycan biosynthesis. In terms of biological role, cell wall formation. Catalyzes the transfer of a GlcNAc subunit on undecaprenyl-pyrophosphoryl-MurNAc-pentapeptide (lipid intermediate I) to form undecaprenyl-pyrophosphoryl-MurNAc-(pentapeptide)GlcNAc (lipid intermediate II). The polypeptide is UDP-N-acetylglucosamine--N-acetylmuramyl-(pentapeptide) pyrophosphoryl-undecaprenol N-acetylglucosamine transferase (Polynucleobacter asymbioticus (strain DSM 18221 / CIP 109841 / QLW-P1DMWA-1) (Polynucleobacter necessarius subsp. asymbioticus)).